A 197-amino-acid polypeptide reads, in one-letter code: uncharacterized protein (197 aa).

The protein belongs to the NAD(P)H dehydrogenase (quinone) family.

This is an uncharacterized protein from Bacillus subtilis (strain 168).